We begin with the raw amino-acid sequence, 344 residues long: Acireductone dioxygenase (344 aa).

Residues H92, H94, E98, and H137 each contribute to the Fe(2+) site. Residues H92, H94, E98, and H137 each coordinate Ni(2+).

The protein belongs to the acireductone dioxygenase (ARD) family. Fe(2+) is required as a cofactor. It depends on Ni(2+) as a cofactor.

It localises to the cytoplasm. The protein resides in the nucleus. The catalysed reaction is 1,2-dihydroxy-5-(methylsulfanyl)pent-1-en-3-one + O2 = 4-methylsulfanyl-2-oxobutanoate + formate + 2 H(+). The enzyme catalyses 1,2-dihydroxy-5-(methylsulfanyl)pent-1-en-3-one + O2 = 3-(methylsulfanyl)propanoate + CO + formate + 2 H(+). It functions in the pathway amino-acid biosynthesis; L-methionine biosynthesis via salvage pathway; L-methionine from S-methyl-5-thio-alpha-D-ribose 1-phosphate: step 5/6. Its function is as follows. Catalyzes 2 different reactions between oxygen and the acireductone 1,2-dihydroxy-3-keto-5-methylthiopentene (DHK-MTPene) depending upon the metal bound in the active site. Fe-containing acireductone dioxygenase (Fe-ARD) produces formate and 2-keto-4-methylthiobutyrate (KMTB), the alpha-ketoacid precursor of methionine in the methionine recycle pathway. Ni-containing acireductone dioxygenase (Ni-ARD) produces methylthiopropionate, carbon monoxide and formate, and does not lie on the methionine recycle pathway. The sequence is that of Acireductone dioxygenase from Leishmania braziliensis.